A 180-amino-acid polypeptide reads, in one-letter code: Large ribosomal subunit protein uL5 (180 aa).

This sequence belongs to the universal ribosomal protein uL5 family. Part of the 50S ribosomal subunit; part of the 5S rRNA/L5/L18/L25 subcomplex. Contacts the 5S rRNA and the P site tRNA. Forms a bridge to the 30S subunit in the 70S ribosome.

In terms of biological role, this is one of the proteins that bind and probably mediate the attachment of the 5S RNA into the large ribosomal subunit, where it forms part of the central protuberance. In the 70S ribosome it contacts protein S13 of the 30S subunit (bridge B1b), connecting the 2 subunits; this bridge is implicated in subunit movement. Contacts the P site tRNA; the 5S rRNA and some of its associated proteins might help stabilize positioning of ribosome-bound tRNAs. The chain is Large ribosomal subunit protein uL5 from Mesoplasma florum (strain ATCC 33453 / NBRC 100688 / NCTC 11704 / L1) (Acholeplasma florum).